A 1019-amino-acid chain; its full sequence is MYILVWKEGQQIRTFQDLEECGQFQTASNITDGQIFSINVTPTMSKGGETGETQLRRLMYLSASTEPEKCNAEYLADMAHVATLRNKQIGVSGFLLYSSPFFFQVIEGTDEDLDFLFAKISADPRHERCIVLANGPCTGRMYGEWHMKDSHIDNITKHPAIKTILFQIARSFSSMWSYLPKNAANMLLLGKNPNKQAPEPMSVVVTFIYLVEFSSILAHPGLTEQCADILAAFVDACVRNVEGTGGQVAKFITGICMAYWPINRAEDALVGLQQLSEDLAELRSQQPPGSALSLIYSRCGVHYGRALLCNAGFRKADFTLLGDCINTASRITSLSVKLKVPLLLSFEVRCLLGDEMREELESSGLHKVKGRDKPVQVYQFNAPELDSAMVRAKIEQFNPGRYRALCPVKPYESLHPAQRPPIFDDTPRENQPKLSQVQRRDSLVDRLSLIAKLAFPSSMMAGGEGQLITLTYISQAAHPMSRLDLASIQRIAFARNESSNITGSLLYVSGLFVQTLEGPKGAVVSLYLKIRQDKRHKDVVAVFMAPIDERVYGSPLDMTSATEEMLATFPPLQDVLSQLAKSFISLETYVPSTVVRYLTAGNNPRNLQPVSVEVVMLATDICSFTPLSEKCSLTEVWTICNTFIDACTSAICNEGGEVIKLIGDCVTAYFPPTGADNAVHACQEIVSFCAQLRDAFHDVLDCRSVVACGVGLDFGQVIMAQCGSLGMTEFVVAGEVSARVMEVEALTREAGRAIVITEPVADRLSPKLRDTGIVPCQEGVDGVPCYGILGPEWELDVATIKKNIYGFHDARALAAMKKVDDGTNAPGRGAPAGGIPSSPKVRPPGRTNSVSSYTPDPNEALDPRMAESVFLDMCHQRGDTANNSIAVKLRQAANDDRLDLGRMLQGPHELMPVMQAIKHLTNLRMLNMSDNFVDDNNVGELVESCIPMRSLQVLDLSNNPGLTKVIALKRLIKHNTQVREILLNGTRIAPTEQRKLQSSMNVNRLCASTDLKGSHKYEH.

The BLUF 1 domain occupies 55–148 (LRRLMYLSAS…GRMYGEWHMK (94 aa)). The Guanylate cyclase 1 domain maps to 204-332 (VVTFIYLVEF…DCINTASRIT (129 aa)). The BLUF 2 domain occupies 467–559 (LITLTYISQA…RVYGSPLDMT (93 aa)). Positions 615–744 (VMLATDICSF…EVSARVMEVE (130 aa)) constitute a Guanylate cyclase 2 domain. The disordered stretch occupies residues 822–861 (GTNAPGRGAPAGGIPSSPKVRPPGRTNSVSSYTPDPNEAL). A compositionally biased stretch (low complexity) spans 825 to 839 (APGRGAPAGGIPSSP). The segment covering 846–855 (RTNSVSSYTP) has biased composition (polar residues).

It belongs to the adenylyl cyclase class-4/guanylyl cyclase family. In terms of assembly, heterotetramer of two alpha and two beta subunits. The cofactor is FAD.

It is found in the cell projection. The protein localises to the cilium. The protein resides in the flagellum. The catalysed reaction is ATP = 3',5'-cyclic AMP + diphosphate. With respect to regulation, activity increased by up to 80-fold under blue light. Functionally, acts as a blue light photoreceptor for the step-up photophobic response. Mediates photoavoidance. The chain is Photoactivated adenylate cyclase subunit alpha from Euglena gracilis.